A 170-amino-acid chain; its full sequence is Adenine phosphoribosyltransferase (170 aa).

This sequence belongs to the purine/pyrimidine phosphoribosyltransferase family. Homodimer.

It localises to the cytoplasm. The enzyme catalyses AMP + diphosphate = 5-phospho-alpha-D-ribose 1-diphosphate + adenine. It functions in the pathway purine metabolism; AMP biosynthesis via salvage pathway; AMP from adenine: step 1/1. Catalyzes a salvage reaction resulting in the formation of AMP, that is energically less costly than de novo synthesis. This is Adenine phosphoribosyltransferase from Brachyspira hyodysenteriae (strain ATCC 49526 / WA1).